The sequence spans 517 residues: Methionine aminopeptidase 1b (517 aa).

The tract at residues 74–94 (YCNKENSNNNNNNNNNNNNNL) is disordered. Positions 79 to 94 (NSNNNNNNNNNNNNNL) are enriched in low complexity. The C6H2-type zinc-finger motif lies at 114–166 (ENLCSGCKKVLIKKLSCPICLKNKIFSYFCNQECFKGSWKEHQKIHENMNKEN). The Zn(2+) site is built by cysteine 117, cysteine 120, cysteine 130, cysteine 133, cysteine 143, cysteine 147, histidine 155, and histidine 159. Histidine 325 serves as a coordination point for a protein. Zn(2+) contacts are provided by aspartate 342, aspartate 353, and histidine 419. Histidine 426 is an a protein binding site. Residues glutamate 452 and glutamate 483 each coordinate Zn(2+).

The protein belongs to the peptidase M24A family. Methionine aminopeptidase type 1 subfamily. In terms of assembly, associates with the 60S ribosomal subunit of the 80S translational complex. The cofactor is Zn(2+). Co(2+) serves as cofactor. Requires Mn(2+) as cofactor. It depends on Fe(2+) as a cofactor.

It localises to the cytoplasm. It carries out the reaction Release of N-terminal amino acids, preferentially methionine, from peptides and arylamides.. With respect to regulation, inhibited by pyrimidine derivative XC11. Its function is as follows. Cotranslationally removes the N-terminal methionine from nascent proteins. The N-terminal methionine is often cleaved when the second residue in the primary sequence is small and uncharged (Met-Ala-, Cys, Gly, Pro, Ser, Thr, or Val). May play an important role in parasite growth during the blood asexual stage. The chain is Methionine aminopeptidase 1b from Plasmodium falciparum (isolate 3D7).